A 156-amino-acid polypeptide reads, in one-letter code: E3 ubiquitin-protein ligase RNF181 (156 aa).

The RING-type; atypical zinc-finger motif lies at 79–120 (CPVCLLEFEEQESVREMPCKHLFHTGCILPWLNKTNSCPLCR). The disordered stretch occupies residues 135–156 (KDKERRRQREHRLEDLHGAMYT).

Belongs to the RNF181 family.

The enzyme catalyses S-ubiquitinyl-[E2 ubiquitin-conjugating enzyme]-L-cysteine + [acceptor protein]-L-lysine = [E2 ubiquitin-conjugating enzyme]-L-cysteine + N(6)-ubiquitinyl-[acceptor protein]-L-lysine.. It participates in protein modification; protein ubiquitination. Functionally, E3 ubiquitin-protein ligase which accepts ubiquitin from an E2 ubiquitin-conjugating enzyme in the form of a thioester and then directly transfers the ubiquitin to targeted substrates. Catalyzes monoubiquitination of 26S proteasome subunit PSMC2/RPT1. The sequence is that of E3 ubiquitin-protein ligase RNF181 (rnf181) from Danio rerio (Zebrafish).